The sequence spans 157 residues: Endoribonuclease YbeY (157 aa).

The Zn(2+) site is built by His-113, His-117, and His-123.

Belongs to the endoribonuclease YbeY family. The cofactor is Zn(2+).

Its subcellular location is the cytoplasm. Its function is as follows. Single strand-specific metallo-endoribonuclease involved in late-stage 70S ribosome quality control and in maturation of the 3' terminus of the 16S rRNA. This Ehrlichia ruminantium (strain Gardel) protein is Endoribonuclease YbeY.